The sequence spans 301 residues: uncharacterized protein (301 aa).

Catalysis depends on charge relay system residues serine 44 and tyrosine 107. Tyrosine 133 functions as the Proton donor in the catalytic mechanism. Catalysis depends on lysine 162, which acts as the Schiff-base intermediate with substrate.

This sequence belongs to the DapA family. Homotetramer.

The protein localises to the cytoplasm. This is an uncharacterized protein from Pyrobaculum neutrophilum (strain DSM 2338 / JCM 9278 / NBRC 100436 / V24Sta) (Thermoproteus neutrophilus).